Here is a 184-residue protein sequence, read N- to C-terminus: Inosine triphosphate pyrophosphatase (184 aa).

Residue 10 to 15 (TGNVKK) participates in ITP binding. E37 is a binding site for Mg(2+). ITP-binding positions include K49, 65–66 (DT), K82, 141–144 (FGWD), K164, and 169–170 (HR).

This sequence belongs to the HAM1 NTPase family. In terms of assembly, homodimer. Mg(2+) serves as cofactor. Requires Mn(2+) as cofactor.

It is found in the cytoplasm. The catalysed reaction is ITP + H2O = IMP + diphosphate + H(+). The enzyme catalyses dITP + H2O = dIMP + diphosphate + H(+). It carries out the reaction XTP + H2O = XMP + diphosphate + H(+). Its function is as follows. Pyrophosphatase that hydrolyzes non-canonical purine nucleotides such as inosine triphosphate (ITP), deoxyinosine triphosphate (dITP) or xanthosine 5'-triphosphate (XTP) to their respective monophosphate derivatives. The enzyme does not distinguish between the deoxy- and ribose forms. Probably excludes non-canonical purines from RNA and DNA precursor pools, thus preventing their incorporation into RNA and DNA and avoiding chromosomal lesions. This is Inosine triphosphate pyrophosphatase from Caenorhabditis elegans.